A 735-amino-acid chain; its full sequence is Catalase-peroxidase (735 aa).

The tryptophyl-tyrosyl-methioninium (Trp-Tyr) (with M-246) cross-link spans 97-220 (WHAAGTYRIG…LAAVQMGLIY (124 aa)). Residue H98 is the Proton acceptor of the active site. A cross-link (tryptophyl-tyrosyl-methioninium (Tyr-Met) (with W-97)) is located at residues 220 to 246 (YVNPEGPNGKPDPMAAAHDIRETFGRM). H261 is a binding site for heme b. The segment at 342-362 (AHQWTPKNPEAASTVPDAHDP) is disordered.

It belongs to the peroxidase family. Peroxidase/catalase subfamily. Homodimer or homotetramer. Heme b is required as a cofactor. In terms of processing, formation of the three residue Trp-Tyr-Met cross-link is important for the catalase, but not the peroxidase activity of the enzyme.

The catalysed reaction is H2O2 + AH2 = A + 2 H2O. It catalyses the reaction 2 H2O2 = O2 + 2 H2O. Bifunctional enzyme with both catalase and broad-spectrum peroxidase activity. The sequence is that of Catalase-peroxidase from Gloeobacter violaceus (strain ATCC 29082 / PCC 7421).